The primary structure comprises 216 residues: Outer-membrane lipoprotein LolB (216 aa).

The N-terminal stretch at 1 to 24 (MNNLNYFTKISASCAALALMTLAG) is a signal peptide. A lipid anchor (N-palmitoyl cysteine) is attached at C25. The S-diacylglycerol cysteine moiety is linked to residue C25.

Belongs to the LolB family. In terms of assembly, monomer.

It is found in the cell outer membrane. Functionally, plays a critical role in the incorporation of lipoproteins in the outer membrane after they are released by the LolA protein. The chain is Outer-membrane lipoprotein LolB from Shewanella loihica (strain ATCC BAA-1088 / PV-4).